The primary structure comprises 288 residues: dTDP-4-keto-6-deoxy-D-glucose reductase (288 aa).

Residues 12–14 (GML), 38–39 (DI), 62–64 (AWT), tyrosine 127, and lysine 131 contribute to the NADH site. NADPH-binding positions include 13 to 14 (ML), 38 to 39 (DI), 62 to 64 (AWT), tyrosine 127, and lysine 131. Tyrosine 127 acts as the Proton donor/acceptor in catalysis.

This sequence belongs to the dTDP-4-dehydrorhamnose reductase family. Requires Mg(2+) as cofactor.

It functions in the pathway antibiotic biosynthesis; novobiocin biosynthesis. Functionally, reduces the product formed from the reaction of NovW with dTDP-4-keto-6-deoxy-D-glucose to result in dTDP-5-methyl-L-rhamnose in the novobiocin biosynthesis pathway, an aminocoumarin family antibiotic that targets bacterial DNA gyrases. This chain is dTDP-4-keto-6-deoxy-D-glucose reductase (novS), found in Streptomyces niveus (Streptomyces spheroides).